Reading from the N-terminus, the 245-residue chain is Uridylate kinase (245 aa).

15–18 (KLSG) lines the ATP pocket. The segment at 23–28 (GDEGFG) is involved in allosteric activation by GTP. Gly57 is a UMP binding site. Residues Gly58 and Arg62 each contribute to the ATP site. UMP-binding positions include Asp77 and 138–145 (TGNPFCTT). 3 residues coordinate ATP: Thr165, Tyr171, and Asp174.

The protein belongs to the UMP kinase family. As to quaternary structure, homohexamer.

Its subcellular location is the cytoplasm. The catalysed reaction is UMP + ATP = UDP + ADP. Its pathway is pyrimidine metabolism; CTP biosynthesis via de novo pathway; UDP from UMP (UMPK route): step 1/1. With respect to regulation, allosterically activated by GTP. Inhibited by UTP. Catalyzes the reversible phosphorylation of UMP to UDP. This Shewanella sp. (strain W3-18-1) protein is Uridylate kinase.